A 172-amino-acid chain; its full sequence is Large ribosomal subunit protein uL22y (172 aa).

It belongs to the universal ribosomal protein uL22 family.

In Hordeum vulgare (Barley), this protein is Large ribosomal subunit protein uL22y.